Here is a 1060-residue protein sequence, read N- to C-terminus: Desmoglein-1-beta (1060 aa).

The first 23 residues, 1-23 (MDWHSFRIAALLLTSLVVLEVNS), serve as a signal peptide directing secretion. A propeptide spanning residues 24–49 (EFQIQVRDHNAKNGTIKWHSIRRQKR) is cleaved from the precursor. Cadherin domains follow at residues 50 to 157 (EWIK…PPVF), 158 to 269 (SMTT…IPYL), 270 to 389 (EQSS…RPGS), and 386 to 493 (RPGS…PGSD). The Extracellular portion of the chain corresponds to 50-567 (EWIKFAAACR…ITEDNVHFGP (518 aa)). Residue N110 is glycosylated (N-linked (GlcNAc...) (high mannose) asparagine). N-linked (GlcNAc...) asparagine glycosylation occurs at N180. The interval 490 to 560 (PGSDGGGSSS…PEPEPFDITE (71 aa)) is disordered. A compositionally biased stretch (gly residues) spans 492–503 (SDGGGSSSGSGG). Residues 510–519 (NGYQGTSTVG) are compositionally biased toward polar residues. Gly residues predominate over residues 525-537 (GSGGVTSSGGGSG). The span at 549 to 560 (DEPEPEPFDITE) shows a compositional bias: acidic residues. Residues 568–588 (AGIGLLIMGFLVLGLVPFLLI) traverse the membrane as a helical segment. The Cytoplasmic segment spans residues 589–1060 (CCDCGGAPGG…TKYSTVQYSK (472 aa)). The segment covering 792–801 (PDPDSSWPPQ) has biased composition (low complexity). The interval 792 to 811 (PDPDSSWPPQSTEPMCPQST) is disordered. Desmoglein repeat repeat units lie at residues 835 to 861 (AYPS…TVRE), 862 to 891 (SYAT…ERVV), 892 to 921 (GPVP…ERVI), 922 to 949 (APGS…ERVI), and 950 to 978 (QPTS…ERVV).

Interacts with DSC3; there is evidence to suggest that the interaction promotes cell-cell adhesion of keratinocytes. Expressed in epidermis.

It localises to the cell membrane. It is found in the cell junction. The protein resides in the desmosome. Its subcellular location is the cytoplasm. The protein localises to the nucleus. In terms of biological role, component of intercellular desmosome junctions. Involved in the interaction of plaque proteins and intermediate filaments mediating cell-cell adhesion. This Mus musculus (Mouse) protein is Desmoglein-1-beta (Dsg1b).